The primary structure comprises 410 residues: Platelet-activating factor acetylhydrolase IB subunit alpha (410 aa).

The tract at residues 1–38 is required for self-association and interaction with PAFAH1B2 and PAFAH1B3; that stretch reads MVLSQRQRDELNRAIADYLRSNGYEEAYSVFKKEAELD. Positions 1-66 are interaction with NDE1; that stretch reads MVLSQRQRDE…SVIRLQKKVM (66 aa). The segment at 1 to 102 is interaction with NDEL1; the sequence is MVLSQRQRDE…EWIPRPPEKY (102 aa). The 33-residue stretch at 7–39 folds into the LisH domain; that stretch reads QRDELNRAIADYLRSNGYEEAYSVFKKEAELDM. The residue at position 53 (Lys-53) is an N6-acetyllysine. Residues 56 to 82 adopt a coiled-coil conformation; the sequence is TSVIRLQKKVMELESKLNEAKEEFTSG. The segment at 83-410 is interaction with dynein and dynactin; it reads GPLGQKRDPK…DQTVKVWECR (328 aa). WD repeat units lie at residues 106 to 147, 148 to 187, 190 to 229, 232 to 271, 274 to 333, 336 to 377, and 378 to 410; these read GHRS…RTLK, GHTD…CIRT, GHDH…CVKT, GHRE…CKAE, EHEH…CLMT, GHDN…KTLN, and AHEH…WECR. Ser-109 is subject to Phosphoserine. The tract at residues 367–409 is interaction with DCX; sequence YKNKRCMKTLNAHEHFVTSLDFHKTAPYVVTGSVDQTVKVWEC. The segment at 388 to 410 is interaction with NDEL1; sequence FHKTAPYVVTGSVDQTVKVWECR.

Belongs to the WD repeat LIS1/nudF family. In terms of assembly, can self-associate. Component of the cytosolic PAF-AH (I) heterotetrameric enzyme, which is composed of PAFAH1B1 (beta), PAFAH1B2 (alpha2) and PAFAH1B3 (alpha1) subunits. The catalytic activity of the enzyme resides in the alpha1 (PAFAH1B3) and alpha2 (PAFAH1B2) subunits, whereas the beta subunit (PAFAH1B1) has regulatory activity. Trimer formation is not essential for the catalytic activity. Interacts with the catalytic dimer of PAF-AH (I) heterotetrameric enzyme: interacts with PAFAH1B2 homodimer (alpha2/alpha2 homodimer), PAFAH1B3 homodimer (alpha1/alpha1 homodimer) and PAFAH1B2-PAFAH1B3 heterodimer (alpha2/alpha1 heterodimer). Interacts with DCX, dynein, dynactin, IQGAP1, KATNB1, NDE1, NDEL1, NUDC and RSN. Interacts with DISC1, and this interaction is enhanced by NDEL1. Interacts with DAB1 when DAB1 is phosphorylated in response to RELN/reelin signaling. Interacts with INTS13. Interacts with DCDC1.

It is found in the cytoplasm. It localises to the cytoskeleton. The protein localises to the microtubule organizing center. Its subcellular location is the centrosome. The protein resides in the spindle. It is found in the nucleus membrane. Its function is as follows. Regulatory subunit (beta subunit) of the cytosolic type I platelet-activating factor (PAF) acetylhydrolase (PAF-AH (I)), an enzyme that catalyzes the hydrolyze of the acetyl group at the sn-2 position of PAF and its analogs and participates in PAF inactivation. Regulates the PAF-AH (I) activity in a catalytic dimer composition-dependent manner. Positively regulates the activity of the minus-end directed microtubule motor protein dynein. May enhance dynein-mediated microtubule sliding by targeting dynein to the microtubule plus end. Required for several dynein- and microtubule-dependent processes such as the maintenance of Golgi integrity, the peripheral transport of microtubule fragments and the coupling of the nucleus and centrosome. Required during brain development for the proliferation of neuronal precursors and the migration of newly formed neurons from the ventricular/subventricular zone toward the cortical plate. Neuronal migration involves a process called nucleokinesis, whereby migrating cells extend an anterior process into which the nucleus subsequently translocates. During nucleokinesis dynein at the nuclear surface may translocate the nucleus towards the centrosome by exerting force on centrosomal microtubules. Also required for proper activation of Rho GTPases and actin polymerization at the leading edge of locomoting cerebellar neurons and postmigratory hippocampal neurons in response to calcium influx triggered via NMDA receptors. May also play a role in other forms of cell locomotion including the migration of fibroblasts during wound healing. Required for dynein recruitment to microtubule plus ends and BICD2-bound cargos. May modulate the Reelin pathway through interaction of the PAF-AH (I) catalytic dimer with VLDLR. In Sus scrofa (Pig), this protein is Platelet-activating factor acetylhydrolase IB subunit alpha.